We begin with the raw amino-acid sequence, 573 residues long: Cytochrome P450 monooxygenase GME11363 (573 aa).

Residues 10 to 30 form a helical membrane-spanning segment; sequence IGVVAAVLLAALILLYRAALP. Position 519 (Cys519) interacts with heme.

Belongs to the cytochrome P450 family. Requires heme as cofactor.

The protein localises to the membrane. It participates in secondary metabolite biosynthesis. In terms of biological role, cytochrome P450 monooxygenase; part of the gene cluster that mediates the biosynthesis of dibenzodioxocinones such as pestalotiollide B, a novel class of inhibitors against cholesterol ester transfer protein (CEPT). The biosynthesis initiates from condensation of acetate and malonate units catalyzed by the non-reducing PKS pks8/GME11356. Pks8/GME11356 lacks a thioesterase (TE) domain, which is important to the cyclizing of the third ring of atrochrysone carboxylic acid, and the esterase GME11355 might play the role of TE and catalyzes the cyclization reaction of the C ring. The lactamase-like protein GME11357 (or other beta-lactamases in Pestalotiopsis microspora) probably hydrolyzes the thioester bond between the ACP of pks8/GME11356 and the intermediate to release atrochrysone carboxylic acid, which is spontaneously dehydrates to form endocrocin anthrone. Endocrocin anthrone is further converted to emodin via the endocrocin intermediate. Emodin is then oxidized by several enzymes such as the Baeyer-Villiger oxidase GME11358, the oxidoreductase GME11367, the short chain dehydrogenase/reductase GME11373, as well as by other oxidoreductases from the cluster, to modify the A and C rings and open the B ring, and finally yield monodictyphenone. The prenyltransferase GME11375 may catalyze the addition reaction between the C5 side chains and the carbon bone of dibenzodioxocinones. The remaining biochemical reactions to the final product dibenzodioxocinones should be methylation catalyzed by methyltransferase GME11366 and reduction and lactonization reaction catalyzed by a series of oxidordeuctases. The sequence is that of Cytochrome P450 monooxygenase GME11363 from Pestalotiopsis microspora.